A 218-amino-acid polypeptide reads, in one-letter code: Cytidylate kinase (218 aa).

Position 11–19 (11–19) interacts with ATP; the sequence is GPGASGKGT.

Belongs to the cytidylate kinase family. Type 1 subfamily.

The protein localises to the cytoplasm. The catalysed reaction is CMP + ATP = CDP + ADP. It carries out the reaction dCMP + ATP = dCDP + ADP. The chain is Cytidylate kinase from Neisseria meningitidis serogroup B (strain ATCC BAA-335 / MC58).